The chain runs to 975 residues: E3 ubiquitin-protein ligase BRE1A (975 aa).

Positions M1–T30 are disordered. K21 carries the N6-acetyllysine modification. At S41 the chain carries Phosphoserine. Positions T43–L90 form a coiled coil. The disordered stretch occupies residues K125–A155. Residues S136 and S138 each carry the phosphoserine modification. Positions N139 to G151 are enriched in basic and acidic residues. 2 coiled-coil regions span residues E168–V375 and S429–K898. 2 positions are modified to N6-acetyllysine: K348 and K510. The segment at D507–E622 is disordered. A Phosphoserine modification is found at S522. Residues E527 to S540 are compositionally biased toward basic and acidic residues. Low complexity predominate over residues L543 to A552. The span at N558–E622 shows a compositional bias: basic and acidic residues. Residue S562 is modified to Phosphoserine. The segment at C922–N961 adopts an RING-type zinc-finger fold.

This sequence belongs to the BRE1 family. Component of the RNF20/40 complex (also known as BRE1 complex) probably composed of 2 copies of RNF20/BRE1A and 2 copies of RNF40/BRE1B. Interacts with UBE2E1/UBCH6. Interacts with p53/TP53 and WAC. Interacts with PAF1; the interaction mediates the association of the PAF1 and RNF20/40 complexes which is a prerequsite for recruitment of UBE2A/B. Interacts with isoform 1 and isoform 2 of PA2G4. Interacts with FBXL19. As to quaternary structure, (Microbial infection) Interacts with human herpesvirus 8 (KSHV) protein RTA/ORF50; this interaction targets the SMC5-SMC6 complex for proteasomal degradation. As to expression, expressed in the normal brain and also in malignant gliomas (at protein level).

It is found in the nucleus. It catalyses the reaction S-ubiquitinyl-[E2 ubiquitin-conjugating enzyme]-L-cysteine + [acceptor protein]-L-lysine = [E2 ubiquitin-conjugating enzyme]-L-cysteine + N(6)-ubiquitinyl-[acceptor protein]-L-lysine.. It functions in the pathway protein modification; protein ubiquitination. Its function is as follows. Component of the RNF20/40 E3 ubiquitin-protein ligase complex that mediates monoubiquitination of 'Lys-120' of histone H2B (H2BK120ub1). H2BK120ub1 gives a specific tag for epigenetic transcriptional activation and is also prerequisite for histone H3 'Lys-4' and 'Lys-79' methylation (H3K4me and H3K79me, respectively). It thereby plays a central role inb histone code and gene regulation. The RNF20/40 complex forms a H2B ubiquitin ligase complex in cooperation with the E2 enzyme UBE2A or UBE2B; reports about the cooperation with UBE2E1/UBCH are contradictory. Required for transcriptional activation of Hox genes. Recruited to the MDM2 promoter, probably by being recruited by p53/TP53, and thereby acts as a transcriptional coactivator. Mediates the polyubiquitination of isoform 2 of PA2G4 in cancer cells leading to its proteasome-mediated degradation. Functionally, (Microbial infection) Promotes the human herpesvirus 8 (KSHV) lytic cycle by inducing the expression of lytic viral genes including the latency switch gene RTA/ORF50. The chain is E3 ubiquitin-protein ligase BRE1A (RNF20) from Homo sapiens (Human).